Reading from the N-terminus, the 177-residue chain is CDP-archaeol synthase (177 aa).

A run of 5 helical transmembrane segments spans residues Leu-6–Phe-26, Cys-54–Phe-74, Val-90–Ile-110, Leu-124–Ile-144, and Met-148–Tyr-168.

It belongs to the CDP-archaeol synthase family. It depends on Mg(2+) as a cofactor.

Its subcellular location is the cell membrane. The enzyme catalyses 2,3-bis-O-(geranylgeranyl)-sn-glycerol 1-phosphate + CTP + H(+) = CDP-2,3-bis-O-(geranylgeranyl)-sn-glycerol + diphosphate. It participates in membrane lipid metabolism; glycerophospholipid metabolism. Functionally, catalyzes the formation of CDP-2,3-bis-(O-geranylgeranyl)-sn-glycerol (CDP-archaeol) from 2,3-bis-(O-geranylgeranyl)-sn-glycerol 1-phosphate (DGGGP) and CTP. This reaction is the third ether-bond-formation step in the biosynthesis of archaeal membrane lipids. This Methanocaldococcus jannaschii (strain ATCC 43067 / DSM 2661 / JAL-1 / JCM 10045 / NBRC 100440) (Methanococcus jannaschii) protein is CDP-archaeol synthase.